The following is a 464-amino-acid chain: Protein FAM90A20 (464 aa).

6 disordered regions span residues 16-42 (RAQTLQKQRRAPVGPRAPPPDEEDPRL), 71-213 (ATLG…IPRP), 228-247 (PTHSSPEGSCREVPQAASKT), 254-273 (VRTQAQDKRPAVTSQPCPSA), 309-389 (RLGP…HDGA), and 418-437 (EKPGAFLAQSPHVSEKSEAP). Basic and acidic residues-rich tracts occupy residues 74 to 83 (GKKEGKENLK) and 97 to 114 (NKDKGEKEERPRQQDPQR). Residues 180–197 (LASLSPLRKASLSSSSSL) show a composition bias toward low complexity.

The protein belongs to the FAM90 family.

The sequence is that of Protein FAM90A20 from Homo sapiens (Human).